Here is a 328-residue protein sequence, read N- to C-terminus: DNA-directed RNA polymerase subunit alpha (328 aa).

The interval 1–231 is alpha N-terminal domain (alpha-NTD); that stretch reads MIYQMQMPAK…EHVTFFANFS (231 aa). Residues 247–328 are alpha C-terminal domain (alpha-CTD); sequence DEFETMRRLL…MDITRYQMKG (82 aa).

Belongs to the RNA polymerase alpha chain family. Homodimer. The RNAP catalytic core consists of 2 alpha, 1 beta, 1 beta' and 1 omega subunit. When a sigma factor is associated with the core the holoenzyme is formed, which can initiate transcription.

The enzyme catalyses RNA(n) + a ribonucleoside 5'-triphosphate = RNA(n+1) + diphosphate. Functionally, DNA-dependent RNA polymerase catalyzes the transcription of DNA into RNA using the four ribonucleoside triphosphates as substrates. The chain is DNA-directed RNA polymerase subunit alpha from Chlorobium luteolum (strain DSM 273 / BCRC 81028 / 2530) (Pelodictyon luteolum).